A 238-amino-acid chain; its full sequence is Ribosomal RNA small subunit methyltransferase G (238 aa).

Residues G77, F82, 128–129 (AE), and R147 each bind S-adenosyl-L-methionine.

Belongs to the methyltransferase superfamily. RNA methyltransferase RsmG family.

Its subcellular location is the cytoplasm. Functionally, specifically methylates the N7 position of guanine in position 535 of 16S rRNA. The chain is Ribosomal RNA small subunit methyltransferase G from Listeria welshimeri serovar 6b (strain ATCC 35897 / DSM 20650 / CCUG 15529 / CIP 8149 / NCTC 11857 / SLCC 5334 / V8).